Here is a 341-residue protein sequence, read N- to C-terminus: Methionine import ATP-binding protein MetN 2 (341 aa).

The 240-residue stretch at 2-241 (IKLNQIVKRY…PQHEVTKRFV (240 aa)) folds into the ABC transporter domain. 38 to 45 (GFSGAGKS) is an ATP binding site.

This sequence belongs to the ABC transporter superfamily. Methionine importer (TC 3.A.1.24) family. The complex is composed of two ATP-binding proteins (MetN), two transmembrane proteins (MetI) and a solute-binding protein (MetQ).

It localises to the cell membrane. The enzyme catalyses L-methionine(out) + ATP + H2O = L-methionine(in) + ADP + phosphate + H(+). The catalysed reaction is D-methionine(out) + ATP + H2O = D-methionine(in) + ADP + phosphate + H(+). Its function is as follows. Part of the ABC transporter complex MetNIQ involved in methionine import. Responsible for energy coupling to the transport system. This is Methionine import ATP-binding protein MetN 2 from Staphylococcus epidermidis (strain ATCC 35984 / DSM 28319 / BCRC 17069 / CCUG 31568 / BM 3577 / RP62A).